A 269-amino-acid chain; its full sequence is Tryptophan synthase alpha chain (269 aa).

Catalysis depends on proton acceptor residues glutamate 49 and aspartate 60.

This sequence belongs to the TrpA family. Tetramer of two alpha and two beta chains.

It catalyses the reaction (1S,2R)-1-C-(indol-3-yl)glycerol 3-phosphate + L-serine = D-glyceraldehyde 3-phosphate + L-tryptophan + H2O. Its pathway is amino-acid biosynthesis; L-tryptophan biosynthesis; L-tryptophan from chorismate: step 5/5. In terms of biological role, the alpha subunit is responsible for the aldol cleavage of indoleglycerol phosphate to indole and glyceraldehyde 3-phosphate. In Buchnera aphidicola subsp. Acyrthosiphon pisum (strain APS) (Acyrthosiphon pisum symbiotic bacterium), this protein is Tryptophan synthase alpha chain.